Here is a 1227-residue protein sequence, read N- to C-terminus: Multifunctional 2-oxoglutarate metabolism enzyme (1227 aa).

The segment at Met1 to Ser41 is 2-oxoglutarate dehydrogenase E1, N-terminal part. Over residues Arg23–Leu37 the composition is skewed to basic and acidic residues. Residues Arg23–Ser102 form a disordered region. Residues Pro42–Ala88 are linker. Polar residues predominate over residues Glu43–Arg53. Positions Val60–Ala76 are enriched in pro residues. Over residues Ala88–Ala97 the composition is skewed to low complexity. A succinyltransferase E2 region spans residues Lys89 to Asp335. His314 serves as the catalytic Proton acceptor; for succinyltransferase activity. The interval Asp336–Gly1227 is 2-oxoglutarate dehydrogenase E1, C-terminal part. Residue Arg540 coordinates thiamine diphosphate. Positions 579 and 604 each coordinate 2-oxoglutarate. Thiamine diphosphate contacts are provided by Ser604, Leu606, Asp645, Ala646, Ala647, and Asn678. Position 645 (Asp645) interacts with Mg(2+). Asn678 and Ile680 together coordinate Mg(2+). Residues Asp783–Glu814 are a coiled coil. Position 1020 (His1020) interacts with 2-oxoglutarate. Acetyl-CoA is bound by residues Thr1038, Arg1054, Lys1089, Ser1092, Gln1142, Arg1149, and Arg1150.

Belongs to the 2-oxoacid dehydrogenase family. Kgd subfamily. In terms of assembly, homodimer. Interacts with the FHA domain of unphosphorylated GarA. The 2-oxoglutarate dehydrogenase (ODH) complex contains multiple copies of three enzymatic components: 2-oxoglutarate dehydrogenase (E1), dihydrolipoamide succinyltransferase (E2) and lipoamide dehydrogenase (E3). The cofactor is Mg(2+). Thiamine diphosphate serves as cofactor.

The enzyme catalyses glyoxylate + 2-oxoglutarate + H(+) = 2-hydroxy-3-oxoadipate + CO2. It catalyses the reaction 2-oxoglutarate + H(+) = succinate semialdehyde + CO2. It carries out the reaction N(6)-[(R)-lipoyl]-L-lysyl-[protein] + 2-oxoglutarate + H(+) = N(6)-[(R)-S(8)-succinyldihydrolipoyl]-L-lysyl-[protein] + CO2. The catalysed reaction is N(6)-[(R)-dihydrolipoyl]-L-lysyl-[protein] + succinyl-CoA = N(6)-[(R)-S(8)-succinyldihydrolipoyl]-L-lysyl-[protein] + CoA. It functions in the pathway carbohydrate metabolism; tricarboxylic acid cycle; succinate from 2-oxoglutarate (transferase route): step 1/2. The protein operates within carbohydrate metabolism; tricarboxylic acid cycle; succinyl-CoA from 2-oxoglutarate (dehydrogenase route): step 1/1. With respect to regulation, alpha-ketoglutarate dehydrogenase and decarboxylase activities are inhibited by unphosphorylated GarA, and allosterically activated by acetyl-CoA, the main substrate of the TCA cycle. Both the phosphoadenosine and acetyl moieties of acetyl-CoA are important for activation because neither CoA nor the synthetic compound S-(2-acetamidoethyl)-ethanethioate (which mimics the terminal acetyl-phosphopantetheine group of acetyl-CoA) has an activation effect. Shows three enzymatic activities that share a first common step, the attack of thiamine-PP on 2-oxoglutarate (alpha-ketoglutarate, KG), leading to the formation of an enamine-thiamine-PP intermediate upon decarboxylation. Thus, displays KGD activity, catalyzing the decarboxylation from five-carbon 2-oxoglutarate to four-carbon succinate semialdehyde (SSA). Also catalyzes C-C bond formation between the activated aldehyde formed after decarboxylation of alpha-ketoglutarate and the carbonyl of glyoxylate (GLX), to yield 2-hydroxy-3-oxoadipate (HOA), which spontaneously decarboxylates to form 5-hydroxylevulinate (HLA). And is also a component of the 2-oxoglutarate dehydrogenase (ODH) complex, that catalyzes the overall conversion of 2-oxoglutarate to succinyl-CoA and CO(2). The KG decarboxylase and KG dehydrogenase reactions provide two alternative, tightly regulated, pathways connecting the oxidative and reductive branches of the TCA cycle. The sequence is that of Multifunctional 2-oxoglutarate metabolism enzyme (kgd) from Mycolicibacterium smegmatis (strain ATCC 700084 / mc(2)155) (Mycobacterium smegmatis).